The chain runs to 279 residues: Large ribosomal subunit protein uL2 (279 aa).

Residues 222 to 279 (GVAMNPVDHPHGGGEGRTSGGRHPVTPAGKPTKGAKTRVNKATDKFIIRSRHKAKKGR) form a disordered region. Basic residues predominate over residues 269-279 (IRSRHKAKKGR).

The protein belongs to the universal ribosomal protein uL2 family. In terms of assembly, part of the 50S ribosomal subunit. Forms a bridge to the 30S subunit in the 70S ribosome.

One of the primary rRNA binding proteins. Required for association of the 30S and 50S subunits to form the 70S ribosome, for tRNA binding and peptide bond formation. It has been suggested to have peptidyltransferase activity; this is somewhat controversial. Makes several contacts with the 16S rRNA in the 70S ribosome. The polypeptide is Large ribosomal subunit protein uL2 (Caulobacter vibrioides (strain ATCC 19089 / CIP 103742 / CB 15) (Caulobacter crescentus)).